We begin with the raw amino-acid sequence, 868 residues long: MGKSLVIVESPAKAKTINKYLGSQYVVKSSIGHIRDLPTSGSSSSKEPAAKGRKSASEAPALSPKEKARRQLVSRMGVDPEHGWKAKYEILPGKEKVIDELRRLAKDADTVYLATDLDREGEAIAWHLREAIGGDESRYKRVVFNEITKKAIQEAFSQPGELDINRVNAQQARRFLDRVVGYMVSPLLWQKIARGLSAGRVQSVAVKLVVEREREIRAFVPEEYWEVHADLGTAKGANVRFEVTREKGEAFKPLNEAQAMAALEKLKASAYSVAKREDRPTSSRPSAPFITSTLQQAASNRLGFGVKKTMMMAQRLYEAGYITYMRTDSTNLSADAIGMVRGFIEDEFGQKYLPGKANVYSSKEGAQEAHEAIRPSDVNLKPTQLSGMERDAERLYDLIWRQFVACQMTPAEYLSTSVSVTAGDFELRAKGRILKFDGYTRVLPQQSKPGEDDVLPEMKEGENLKLIKLDPSQHFTKPPARYSEASLVKELEKRGIGRPSTYAAIISTIQERGYVTTHNRRFYAEKMGDIVTDRLNESFANLMDYGFTAGMEEHLDDVAQGERDWKHLLDEFYGDFKKKLEVAEVSEKGMRANQPTLTNIPCRECGRPMMIRTASTGVFLGCSGYSLPPKERCKATVNLIPGDEIAADDEGESESRVLRGKHRCPICSTAMDAYLLDEKHKLHICGNNPDCPGYEIEEGQYRIKGYEGPSLECDKCGSEMQLKTGRFGKFFGCTNPTCKNTRKLLKNGEAAPPKMDAIRMPELKCEKVDDIYVLRDGASGMFLAASQFPKNRETRAPLVSEIIPHKAELDPKYHYLCDAPQKDPDGRPAVIRFSRKTKEQYVQSEVDGKPTGWRAFYDGGKWKVEDKR.

Residues 3 to 147 (KSLVIVESPA…RYKRVVFNEI (145 aa)) enclose the Toprim domain. Glutamate 9 provides a ligand contact to Mg(2+). The interval 34 to 70 (IRDLPTSGSSSSKEPAAKGRKSASEAPALSPKEKARR) is disordered. Aspartate 116 is a Mg(2+) binding site. Positions 163-580 (DINRVNAQQA…EFYGDFKKKL (418 aa)) constitute a Topo IA-type catalytic domain. The interval 197–202 (SAGRVQ) is interaction with DNA. Tyrosine 324 functions as the O-(5'-phospho-DNA)-tyrosine intermediate in the catalytic mechanism. C4-type zinc fingers lie at residues 602–633 (CRECGRPMMIRTASTGVFLGCSGYSLPPKERC), 664–691 (CPICSTAMDAYLLDEKHKLHICGNNPDC), and 713–738 (CDKCGSEMQLKTGRFGKFFGCTNPTC).

The protein belongs to the type IA topoisomerase family. As to quaternary structure, monomer. The cofactor is Mg(2+).

It catalyses the reaction ATP-independent breakage of single-stranded DNA, followed by passage and rejoining.. Functionally, releases the supercoiling and torsional tension of DNA, which is introduced during the DNA replication and transcription, by transiently cleaving and rejoining one strand of the DNA duplex. Introduces a single-strand break via transesterification at a target site in duplex DNA. The scissile phosphodiester is attacked by the catalytic tyrosine of the enzyme, resulting in the formation of a DNA-(5'-phosphotyrosyl)-enzyme intermediate and the expulsion of a 3'-OH DNA strand. The free DNA strand then undergoes passage around the unbroken strand, thus removing DNA supercoils. Finally, in the religation step, the DNA 3'-OH attacks the covalent intermediate to expel the active-site tyrosine and restore the DNA phosphodiester backbone. The sequence is that of DNA topoisomerase 1 from Pseudomonas aeruginosa (strain ATCC 15692 / DSM 22644 / CIP 104116 / JCM 14847 / LMG 12228 / 1C / PRS 101 / PAO1).